Consider the following 302-residue polypeptide: tRNA dimethylallyltransferase (302 aa).

8–15 (GSSGSGKS) lines the ATP pocket. 10 to 15 (SGSGKS) contributes to the substrate binding site. Positions 33–36 (DSLS) are interaction with substrate tRNA.

Belongs to the IPP transferase family. In terms of assembly, monomer. Mg(2+) is required as a cofactor.

It carries out the reaction adenosine(37) in tRNA + dimethylallyl diphosphate = N(6)-dimethylallyladenosine(37) in tRNA + diphosphate. In terms of biological role, catalyzes the transfer of a dimethylallyl group onto the adenine at position 37 in tRNAs that read codons beginning with uridine, leading to the formation of N6-(dimethylallyl)adenosine (i(6)A). The polypeptide is tRNA dimethylallyltransferase (Helicobacter hepaticus (strain ATCC 51449 / 3B1)).